A 235-amino-acid polypeptide reads, in one-letter code: Phosphoribosylaminoimidazole-succinocarboxamide synthase (235 aa).

It belongs to the SAICAR synthetase family.

The catalysed reaction is 5-amino-1-(5-phospho-D-ribosyl)imidazole-4-carboxylate + L-aspartate + ATP = (2S)-2-[5-amino-1-(5-phospho-beta-D-ribosyl)imidazole-4-carboxamido]succinate + ADP + phosphate + 2 H(+). It functions in the pathway purine metabolism; IMP biosynthesis via de novo pathway; 5-amino-1-(5-phospho-D-ribosyl)imidazole-4-carboxamide from 5-amino-1-(5-phospho-D-ribosyl)imidazole-4-carboxylate: step 1/2. In Thermoanaerobacter pseudethanolicus (strain ATCC 33223 / 39E) (Clostridium thermohydrosulfuricum), this protein is Phosphoribosylaminoimidazole-succinocarboxamide synthase.